The chain runs to 693 residues: Polyribonucleotide nucleotidyltransferase (693 aa).

Mg(2+)-binding residues include Asp-489 and Asp-495. Positions 556-615 (PQIHVMNINPAKIKDVVGRGGATVKGIVEKTGAQIDTSDSGEVKVFAKDKKSMDMAVAMI) constitute a KH domain. One can recognise an S1 motif domain in the interval 625–693 (GQVYKGKIVK…GRVKLSLVAR (69 aa)).

Belongs to the polyribonucleotide nucleotidyltransferase family. In terms of assembly, component of the RNA degradosome, which is a multiprotein complex involved in RNA processing and mRNA degradation. Mg(2+) is required as a cofactor.

Its subcellular location is the cytoplasm. The enzyme catalyses RNA(n+1) + phosphate = RNA(n) + a ribonucleoside 5'-diphosphate. Its function is as follows. Involved in mRNA degradation. Catalyzes the phosphorolysis of single-stranded polyribonucleotides processively in the 3'- to 5'-direction. This chain is Polyribonucleotide nucleotidyltransferase, found in Francisella tularensis subsp. tularensis (strain FSC 198).